The sequence spans 273 residues: 2,3,4,5-tetrahydropyridine-2,6-dicarboxylate N-succinyltransferase (273 aa).

Substrate-binding residues include Arg-104 and Asp-141.

Belongs to the transferase hexapeptide repeat family. Homotrimer.

It localises to the cytoplasm. The enzyme catalyses (S)-2,3,4,5-tetrahydrodipicolinate + succinyl-CoA + H2O = (S)-2-succinylamino-6-oxoheptanedioate + CoA. It participates in amino-acid biosynthesis; L-lysine biosynthesis via DAP pathway; LL-2,6-diaminopimelate from (S)-tetrahydrodipicolinate (succinylase route): step 1/3. This chain is 2,3,4,5-tetrahydropyridine-2,6-dicarboxylate N-succinyltransferase, found in Psychrobacter sp. (strain PRwf-1).